The sequence spans 249 residues: 5'-nucleotidase SurE (249 aa).

A divalent metal cation is bound by residues D9, D10, S40, and N92.

Belongs to the SurE nucleotidase family. A divalent metal cation is required as a cofactor.

The protein localises to the cytoplasm. The catalysed reaction is a ribonucleoside 5'-phosphate + H2O = a ribonucleoside + phosphate. Functionally, nucleotidase that shows phosphatase activity on nucleoside 5'-monophosphates. The polypeptide is 5'-nucleotidase SurE (Shewanella loihica (strain ATCC BAA-1088 / PV-4)).